Reading from the N-terminus, the 668-residue chain is tRNA 5-methylaminomethyl-2-thiouridine biosynthesis bifunctional protein MnmC (668 aa).

A tRNA (mnm(5)s(2)U34)-methyltransferase region spans residues 1 to 245 (MKHYSIQPAN…KREMLCGVME (245 aa)). Residues 270–668 (IGGGIASALL…LLKGKAVKAG (399 aa)) are FAD-dependent cmnm(5)s(2)U34 oxidoreductase.

The protein in the N-terminal section; belongs to the methyltransferase superfamily. tRNA (mnm(5)s(2)U34)-methyltransferase family. It in the C-terminal section; belongs to the DAO family. Requires FAD as cofactor.

It localises to the cytoplasm. It carries out the reaction 5-aminomethyl-2-thiouridine(34) in tRNA + S-adenosyl-L-methionine = 5-methylaminomethyl-2-thiouridine(34) in tRNA + S-adenosyl-L-homocysteine + H(+). Catalyzes the last two steps in the biosynthesis of 5-methylaminomethyl-2-thiouridine (mnm(5)s(2)U) at the wobble position (U34) in tRNA. Catalyzes the FAD-dependent demodification of cmnm(5)s(2)U34 to nm(5)s(2)U34, followed by the transfer of a methyl group from S-adenosyl-L-methionine to nm(5)s(2)U34, to form mnm(5)s(2)U34. The sequence is that of tRNA 5-methylaminomethyl-2-thiouridine biosynthesis bifunctional protein MnmC from Shigella flexneri serotype 5b (strain 8401).